The sequence spans 145 residues: uncharacterized protein (145 aa).

The N-terminal stretch at Met1–Gly26 is a signal peptide.

This is an uncharacterized protein from Saccharomyces cerevisiae (strain ATCC 204508 / S288c) (Baker's yeast).